We begin with the raw amino-acid sequence, 204 residues long: Guanylate kinase (204 aa).

The 179-residue stretch at 18–196 (PKLFTISAPA…SYEILKSIFI (179 aa)) folds into the Guanylate kinase-like domain. Residue 25–32 (APAGAGKT) participates in ATP binding.

Belongs to the guanylate kinase family.

Its subcellular location is the cytoplasm. It catalyses the reaction GMP + ATP = GDP + ADP. Functionally, essential for recycling GMP and indirectly, cGMP. This Chlamydia caviae (strain ATCC VR-813 / DSM 19441 / 03DC25 / GPIC) (Chlamydophila caviae) protein is Guanylate kinase.